The following is a 221-amino-acid chain: Large ribosomal subunit protein bL25 (221 aa).

The tract at residues 174–221 (SVVTVVPPTDEPTEEEVEAMEGEAATEEPEVVGEEKEEDSEEENKDEE) is disordered. Over residues 184–221 (EPTEEEVEAMEGEAATEEPEVVGEEKEEDSEEENKDEE) the composition is skewed to acidic residues.

The protein belongs to the bacterial ribosomal protein bL25 family. CTC subfamily. As to quaternary structure, part of the 50S ribosomal subunit; part of the 5S rRNA/L5/L18/L25 subcomplex. Contacts the 5S rRNA. Binds to the 5S rRNA independently of L5 and L18.

Functionally, this is one of the proteins that binds to the 5S RNA in the ribosome where it forms part of the central protuberance. The polypeptide is Large ribosomal subunit protein bL25 (Staphylococcus haemolyticus (strain JCSC1435)).